A 56-amino-acid chain; its full sequence is Envelope protein H3 (56 aa).

This sequence belongs to the orthopoxvirus OPG108 family. In terms of processing, does not contain disulfide bonds.

It localises to the virion membrane. Its function is as follows. Envelope protein that binds to heparan sulfate on the cell surface and might provide virion attachment to target cell. The protein is Envelope protein H3 (OPG108) of Vaccinia virus (strain L-IVP) (VACV).